We begin with the raw amino-acid sequence, 213 residues long: Orotate phosphoribosyltransferase (213 aa).

Lys-26 contacts 5-phospho-alpha-D-ribose 1-diphosphate. 34 to 35 (FF) provides a ligand contact to orotate. 5-phospho-alpha-D-ribose 1-diphosphate is bound by residues 72-73 (YK), Arg-99, Lys-100, Lys-103, His-105, and 124-132 (DDVITAGTA). Residues Thr-128 and Arg-156 each coordinate orotate.

This sequence belongs to the purine/pyrimidine phosphoribosyltransferase family. PyrE subfamily. As to quaternary structure, homodimer. Mg(2+) is required as a cofactor.

It carries out the reaction orotidine 5'-phosphate + diphosphate = orotate + 5-phospho-alpha-D-ribose 1-diphosphate. The protein operates within pyrimidine metabolism; UMP biosynthesis via de novo pathway; UMP from orotate: step 1/2. In terms of biological role, catalyzes the transfer of a ribosyl phosphate group from 5-phosphoribose 1-diphosphate to orotate, leading to the formation of orotidine monophosphate (OMP). This is Orotate phosphoribosyltransferase from Salmonella typhi.